The chain runs to 150 residues: Small ribosomal subunit protein uS19y (150 aa).

This sequence belongs to the universal ribosomal protein uS19 family.

The protein localises to the cytoplasm. The polypeptide is Small ribosomal subunit protein uS19y (RPS15C) (Arabidopsis thaliana (Mouse-ear cress)).